The primary structure comprises 1605 residues: Kinesin-like protein klp-12 (1605 aa).

In terms of domain architecture, Kinesin motor spans 5–358; it reads CVQVALRIRP…MKYANRAKEI (354 aa). 84-91 lines the ATP pocket; it reads GQTGSGKT. Mg(2+) is bound by residues Thr-91 and Ser-217. Disordered regions lie at residues 548–596, 1085–1152, and 1198–1232; these read GENV…EESE, VSDA…SNNN, and SRSNLMSSSSSTTTTTLSSSNLLNPRGTTSSSSSK. The span at 550–559 shows a compositional bias: polar residues; the sequence is NVSSEYSSMA. Acidic residues predominate over residues 560–596; it reads QDEDGTSNEAEELLDEEDLDEDEDETAEEKQEQEESE. Residues 575–730 adopt a coiled-coil conformation; that stretch reads EEDLDEDEDE…KKAKVELIKK (156 aa). A compositionally biased stretch (polar residues) spans 1116–1152; that stretch reads VSTSPASTSFANSTSQSPSFSRNTRFRSTVGGVSNNN. A compositionally biased stretch (low complexity) spans 1200–1232; that stretch reads SNLMSSSSSTTTTTLSSSNLLNPRGTTSSSSSK. WD repeat units follow at residues 1282–1319, 1389–1427, 1525–1566, and 1573–1605; these read GHARGVLSVDVNEKLMVTGSKDRTAKLWDIEACREIRT, FLETLITAADVDPTGQLLFTSFSAYVRVWNLREWKPLGR, AHQQ…RMKL, and AHQEGINDMCSTKSMLFTASGDSTVGFWKSNAV.

Belongs to the TRAFAC class myosin-kinesin ATPase superfamily. Kinesin family. Component of a complex at least composed of alpha tubulin and beta tubulin. Within the complex, interacts with the alpha tubulin and beta tubulin dimer.

The protein resides in the cytoplasm. It is found in the cytoskeleton. Its function is as follows. Microtubule-binding motor protein which has ATPase activity. In complex with alpha and beta tubulins, preferentially binds to the growing microtubule plus-end to stabilize it and detaches following ATP hydrolysis. Negatively regulates axonal length through inhibiting microtubule polymerization at its plus-end. This chain is Kinesin-like protein klp-12, found in Caenorhabditis elegans.